The following is a 530-amino-acid chain: MEASISFLGSTKPNISLFNPSSNVLPRRDFPLPALKLKKVSVLPRILHQKRLIRAQCSDGFKPEEDDGFVLEDVPHLTKFLPDLPSYPNPLKESQAYAIVKRTFVSSEDVVAQNIVVQKGSKRGVHFRRAGPRERVYFRSDEVKACIVTCGGLCPGINTVIREIVCGLNNMYGVNNILGIQGGYRGFYSKNTMNLTPKVVNDIHKRGGTFLQTSRGGHDTAKIVDNIQDRGINQVYIIGGGGTQKGAEKIYEEVERRGLQVAVSGIPKTIDNDIAVIDKSFGFDTAVEEAQRAINAAHVEVESVENGVGIVKLMGRYSGFIAMIATLANRDVDCCLIPESPFFLEGKGGLFEFIEERLKENRHMVIVIAEGAGQDYVAQSMRASETKDASGNRLLLDVGLWLTQQIKDHFTNVRKMMINMKYIDPTYMIRAIPSNASDNVYCTLLAQSAVHGAMAGYSGFTVGPVNSRHAYIPISQVTEVTNTVKLTDRMWARLLASTNQPSFLTGEGALQNVIDMETQEKIDNMKISSI.

The N-terminal 54 residues, Met1–Arg54, are a transit peptide targeting the chloroplast. The residue at position 121 (Ser121) is a Phosphoserine. ATP is bound by residues Gly152, Arg215–Gly216, and Gly240–Thr243. Substrate contacts are provided by residues Thr269 to Asp271, Met314 to Arg316, Glu370, and Tyr427 to Arg430. Residue Asp271 is the Proton acceptor of the active site.

This sequence belongs to the phosphofructokinase type A (PFKA) family. PPi-dependent PFK group II subfamily. Atypical ATP-dependent clade 'X' sub-subfamily. Homotetramer. It depends on Mg(2+) as a cofactor. In terms of tissue distribution, expressed in leaves, stems and flowers.

The protein resides in the plastid. Its subcellular location is the chloroplast. It carries out the reaction beta-D-fructose 6-phosphate + ATP = beta-D-fructose 1,6-bisphosphate + ADP + H(+). The protein operates within carbohydrate degradation; glycolysis; D-glyceraldehyde 3-phosphate and glycerone phosphate from D-glucose: step 3/4. Allosterically activated by AMP. Its function is as follows. Catalyzes the phosphorylation of D-fructose 6-phosphate to fructose 1,6-bisphosphate by ATP, the first committing step of glycolysis. In Arabidopsis thaliana (Mouse-ear cress), this protein is ATP-dependent 6-phosphofructokinase 4, chloroplastic.